The chain runs to 360 residues: GTPase Obg (360 aa).

The 156-residue stretch at 1–156 (MFVDSVEIII…KCVRLELKLI (156 aa)) folds into the Obg domain. The OBG-type G domain maps to 157–360 (ADIGLVGFPN…LKFVLLEALP (204 aa)). Residues 163 to 170 (GFPNAGKS), 188 to 192 (FTTLV), 210 to 213 (DIPG), 279 to 282 (NKCD), and 341 to 343 (SAV) contribute to the GTP site. Residues S170 and T190 each coordinate Mg(2+).

The protein belongs to the TRAFAC class OBG-HflX-like GTPase superfamily. OBG GTPase family. Monomer. Mg(2+) is required as a cofactor.

It localises to the cytoplasm. Functionally, an essential GTPase which binds GTP, GDP and possibly (p)ppGpp with moderate affinity, with high nucleotide exchange rates and a fairly low GTP hydrolysis rate. Plays a role in control of the cell cycle, stress response, ribosome biogenesis and in those bacteria that undergo differentiation, in morphogenesis control. The chain is GTPase Obg from Helicobacter pylori (strain ATCC 700392 / 26695) (Campylobacter pylori).